Consider the following 151-residue polypeptide: Pseudo histidine-containing phosphotransfer protein 2 (151 aa).

One can recognise an HPt domain in the interval 38-133; it reads SPNFVEEVAA…ATLKQKLESY (96 aa).

In terms of biological role, functions as a two-component phosphorelay mediator between cytokinin sensor histidine kinases and response regulators (B-type ARRs). Plays an important role in propagating cytokinin signal transduction. The protein is Pseudo histidine-containing phosphotransfer protein 2 of Oryza sativa subsp. japonica (Rice).